The chain runs to 140 residues: ATP synthase epsilon chain (140 aa).

This sequence belongs to the ATPase epsilon chain family. As to quaternary structure, F-type ATPases have 2 components, CF(1) - the catalytic core - and CF(0) - the membrane proton channel. CF(1) has five subunits: alpha(3), beta(3), gamma(1), delta(1), epsilon(1). CF(0) has three main subunits: a, b and c.

It localises to the cell inner membrane. Its function is as follows. Produces ATP from ADP in the presence of a proton gradient across the membrane. This is ATP synthase epsilon chain from Neisseria gonorrhoeae (strain ATCC 700825 / FA 1090).